The following is a 1457-amino-acid chain: Receptor-type tyrosine-protein phosphatase kappa (1457 aa).

The first 25 residues, 1 to 25, serve as a signal peptide directing secretion; sequence MDVAAAALPAFVALWLLYPWPLLGS. Residues 26–752 lie on the Extracellular side of the membrane; the sequence is ALGQFSAGGC…PAKQTDRVVK (727 aa). Residues 30–193 form the MAM domain; that stretch reads FSAGGCTFDD…IQVLSYPCDK (164 aa). 3 N-linked (GlcNAc...) asparagine glycosylation sites follow: Asn-100, Asn-139, and Asn-210. The 86-residue stretch at 195 to 280 folds into the Ig-like C2-type domain; the sequence is PHFLRLGDVE…TQSERGSGVS (86 aa). Cysteines 215 and 269 form a disulfide. Fibronectin type-III domains are found at residues 293 to 388, 391 to 487, 490 to 594, and 595 to 688; these read PIAP…CAEP, TPKT…TDED, GPVP…SAPS, and LPDY…TVGD. N-linked (GlcNAc...) asparagine glycosylation is found at Asn-415, Asn-423, Asn-435, Asn-461, Asn-551, Asn-585, Asn-589, Asn-606, and Asn-689. A helical transmembrane segment spans residues 753 to 774; sequence IAGISAGILVFILLLLVVIVIV. The Cytoplasmic segment spans residues 775–1457; the sequence is KKSKLAKKRK…DVALEYLESS (683 aa). Position 868 is a phosphoserine (Ser-868). Tyrosine-protein phosphatase domains lie at 899 to 1159 and 1191 to 1453; these read FKEE…ILEA and LKDE…ALEY. Residues Asp-1068, 1100–1106, and Gln-1144 contribute to the substrate site; that span reads CSAGAGR. Cys-1100 (phosphocysteine intermediate) is an active-site residue. Cys-1394 serves as the catalytic Phosphocysteine intermediate.

The protein belongs to the protein-tyrosine phosphatase family. Receptor class 2B subfamily. Post-translationally, this protein undergoes proteolytic processing. High levels in liver and kidney. Lower levels in lung, brain and heart. Not seen in spleen and testis.

The protein localises to the membrane. The enzyme catalyses O-phospho-L-tyrosyl-[protein] + H2O = L-tyrosyl-[protein] + phosphate. In terms of biological role, regulation of processes involving cell contact and adhesion such as growth control, tumor invasion, and metastasis. Negative regulator of EGFR signaling pathway. Forms complexes with beta-catenin and gamma-catenin/plakoglobin. Beta-catenin may be a substrate for the catalytic activity of PTPRK/PTP-kappa. This is Receptor-type tyrosine-protein phosphatase kappa (Ptprk) from Mus musculus (Mouse).